The primary structure comprises 292 residues: Bifunctional protein FolD (292 aa).

Residues 166–168, serine 191, and isoleucine 232 each bind NADP(+); that span reads GRS.

This sequence belongs to the tetrahydrofolate dehydrogenase/cyclohydrolase family. In terms of assembly, homodimer.

It catalyses the reaction (6R)-5,10-methylene-5,6,7,8-tetrahydrofolate + NADP(+) = (6R)-5,10-methenyltetrahydrofolate + NADPH. The catalysed reaction is (6R)-5,10-methenyltetrahydrofolate + H2O = (6R)-10-formyltetrahydrofolate + H(+). The protein operates within one-carbon metabolism; tetrahydrofolate interconversion. In terms of biological role, catalyzes the oxidation of 5,10-methylenetetrahydrofolate to 5,10-methenyltetrahydrofolate and then the hydrolysis of 5,10-methenyltetrahydrofolate to 10-formyltetrahydrofolate. The protein is Bifunctional protein FolD of Wolbachia sp. subsp. Drosophila simulans (strain wRi).